Reading from the N-terminus, the 144-residue chain is Putative low molecular weight protein-tyrosine-phosphatase (144 aa).

The Nucleophile role is filled by Cys9. Arg15 is an active-site residue. Residue Asp115 is the Proton donor of the active site.

It belongs to the low molecular weight phosphotyrosine protein phosphatase family.

The catalysed reaction is O-phospho-L-tyrosyl-[protein] + H2O = L-tyrosyl-[protein] + phosphate. This Klebsiella pneumoniae protein is Putative low molecular weight protein-tyrosine-phosphatase.